A 338-amino-acid polypeptide reads, in one-letter code: Glycerol-3-phosphate dehydrogenase [NAD(P)+] (338 aa).

NADPH contacts are provided by Trp14, Tyr50, and Lys110. Residues Lys110, Gly141, and Ser143 each contribute to the sn-glycerol 3-phosphate site. Ala145 contacts NADPH. Positions 196, 249, 259, 260, and 261 each coordinate sn-glycerol 3-phosphate. The active-site Proton acceptor is the Lys196. Arg260 contributes to the NADPH binding site. Residue Glu285 participates in NADPH binding.

Belongs to the NAD-dependent glycerol-3-phosphate dehydrogenase family.

It is found in the cytoplasm. The enzyme catalyses sn-glycerol 3-phosphate + NAD(+) = dihydroxyacetone phosphate + NADH + H(+). It carries out the reaction sn-glycerol 3-phosphate + NADP(+) = dihydroxyacetone phosphate + NADPH + H(+). It participates in membrane lipid metabolism; glycerophospholipid metabolism. Catalyzes the reduction of the glycolytic intermediate dihydroxyacetone phosphate (DHAP) to sn-glycerol 3-phosphate (G3P), the key precursor for phospholipid synthesis. This is Glycerol-3-phosphate dehydrogenase [NAD(P)+] from Malacoplasma penetrans (strain HF-2) (Mycoplasma penetrans).